The primary structure comprises 205 residues: uncharacterized protein (205 aa).

Residues 1-25 show a composition bias toward polar residues; that stretch reads MSNNNNEAQQPVESTNVESQQNVVQ. The disordered stretch occupies residues 1–205; that stretch reads MSNNNNEAQQ…TSDPAQQVEA (205 aa). Over residues 32-79 the composition is skewed to low complexity; the sequence is NENNDNNNNNNNNNNNNNNNNNNNNNNNNSNNNNNSSNNENNENNENN. Positions 80 to 122 are enriched in basic and acidic residues; sequence SCEKSEQEKPKEPEEPVQEEKSKEPCDQQKVKENEPAEEKETE. Low complexity-rich tracts occupy residues 123–132 and 146–162; these read PAAPVEPENP and QHQQ…NGES. A compositionally biased stretch (basic and acidic residues) spans 170–185; it reads SENKKRSIDEAGDIKD. Positions 194 to 205 are enriched in polar residues; sequence VETSDPAQQVEA.

This is an uncharacterized protein from Dictyostelium discoideum (Social amoeba).